A 175-amino-acid chain; its full sequence is MSERIIMDDAAIQRTVTRIAHEILEYNKGTDNLILLGIKTRGEYLANRIQDKIHQIEQQRIPTGTIDITYFRDDIEHMSSLTTKDAIDIDTDITDKVVIIIDDVLYTGRTVRASLDAILLNARPIKIGLAALVDRGHRELPIRADFVGKNIPTSKEETVSVYLEEMDQRNAVIIK.

Residues Thr-40 to Arg-41, Asp-102 to Thr-110, Arg-135, and Val-159 each bind substrate. Positions Val-98–Thr-110 match the PRPP-binding motif.

This sequence belongs to the purine/pyrimidine phosphoribosyltransferase family. PyrR subfamily. Homodimer and homohexamer; in equilibrium.

It carries out the reaction UMP + diphosphate = 5-phospho-alpha-D-ribose 1-diphosphate + uracil. Functionally, regulates transcriptional attenuation of the pyrimidine nucleotide (pyr) operon by binding in a uridine-dependent manner to specific sites on pyr mRNA. This disrupts an antiterminator hairpin in the RNA and favors formation of a downstream transcription terminator, leading to a reduced expression of downstream genes. Also displays a weak uracil phosphoribosyltransferase activity which is not physiologically significant. The protein is Bifunctional protein PyrR of Staphylococcus aureus (strain MSSA476).